The chain runs to 353 residues: Glycerol-3-phosphate dehydrogenase [NAD(+)], cytoplasmic (353 aa).

Ala-2 is modified (blocked amino end (Ala)). NAD(+) is bound by residues 11-16 (GSGNWG), Phe-98, Lys-121, and Ala-155. A substrate-binding site is contributed by Lys-121. Residue Lys-206 is the Proton acceptor of the active site. Residues Arg-270 and Gln-299 each coordinate NAD(+). Residue 270–271 (RN) participates in substrate binding.

The protein belongs to the NAD-dependent glycerol-3-phosphate dehydrogenase family. Homodimer.

Its subcellular location is the cytoplasm. It carries out the reaction sn-glycerol 3-phosphate + NAD(+) = dihydroxyacetone phosphate + NADH + H(+). It functions in the pathway phospholipid metabolism; alpha-glycerophosphate cycle. In Drosophila virilis (Fruit fly), this protein is Glycerol-3-phosphate dehydrogenase [NAD(+)], cytoplasmic.